The chain runs to 122 residues: Ribosome-binding factor A (122 aa).

Belongs to the RbfA family. As to quaternary structure, monomer. Binds 30S ribosomal subunits, but not 50S ribosomal subunits or 70S ribosomes.

It is found in the cytoplasm. Functionally, one of several proteins that assist in the late maturation steps of the functional core of the 30S ribosomal subunit. Associates with free 30S ribosomal subunits (but not with 30S subunits that are part of 70S ribosomes or polysomes). Required for efficient processing of 16S rRNA. May interact with the 5'-terminal helix region of 16S rRNA. The chain is Ribosome-binding factor A from Cupriavidus pinatubonensis (strain JMP 134 / LMG 1197) (Cupriavidus necator (strain JMP 134)).